A 700-amino-acid polypeptide reads, in one-letter code: MTMFNTIKREFQYGNQQVVIETGRIARQANSILVHMGGVTVLVAAVVKSDAKEGQNFFPLTVNYQEKMYAAGKIPGAYGKREGRASESETLTSRLIDRPIRPLFPEGYVNEIQITATVVSSDKTQSADIAALIGASAALAISDAPFNGPVAAARVGFINGEYVLNPTLEELKESDLDLVVAGTKSAVLMVESEAAELSEDQMLGAVLYGHQQQQIVIDNIASMAAEIGTAKQQYTAPVRNQTLETGMKEQFGTQVSDAYTITDKQARYSKLDEIKDAALAALAGDAESESYADTVSELKEIYNDLKYRTVRDNILSGKPRIDGRDLETVRALDVQVGVLPFTHGSALFTRGETQALVTTTLGNTRDVNMIDSLAGTIRDHFMLHYNFPHFSVGETGREGIPKRREIGHGRLARRGVQAMLPDSDRFPYVIRVVSEITESNGSSSMASVCGASLALMDAGVPIKAPVAGIAMGLVKEGERFAVLSDILGDEDHLGDMDFKVAGSKDGITALQMDIKIEGITPDIMEQALKQAHAGRIHILDAMNKVLPESRTEINAHAPNYAVIEINPDKIRDVIGKGGATIRQLTEETGAVIDIDDAGTIRIFGENKAATKAAIAKIEAITAEVEVGKTYEGTVARIVDFGAFINVLPNTDGLVHISQIADERVENVSDYLKEGQIVKVLVQDVDNRGRIKLTMKGIEQS.

The Mg(2+) site is built by aspartate 491 and aspartate 497. Positions 558 to 617 (PNYAVIEINPDKIRDVIGKGGATIRQLTEETGAVIDIDDAGTIRIFGENKAATKAAIAKI) constitute a KH domain. The S1 motif domain maps to 627–695 (GKTYEGTVAR…NRGRIKLTMK (69 aa)).

It belongs to the polyribonucleotide nucleotidyltransferase family. In terms of assembly, component of the RNA degradosome, which is a multiprotein complex involved in RNA processing and mRNA degradation. It depends on Mg(2+) as a cofactor.

Its subcellular location is the cytoplasm. The enzyme catalyses RNA(n+1) + phosphate = RNA(n) + a ribonucleoside 5'-diphosphate. Involved in mRNA degradation. Catalyzes the phosphorolysis of single-stranded polyribonucleotides processively in the 3'- to 5'-direction. The protein is Polyribonucleotide nucleotidyltransferase of Psychrobacter cryohalolentis (strain ATCC BAA-1226 / DSM 17306 / VKM B-2378 / K5).